Reading from the N-terminus, the 751-residue chain is Diamine oxidase [copper-containing] (751 aa).

The N-terminal stretch at 1 to 19 (MPALGWAVAAILMLQTAMA) is a signal peptide. Asparagine 110 and asparagine 168 each carry an N-linked (GlcNAc...) asparagine glycan. Cysteine 177 and cysteine 181 are disulfide-bonded. The active-site Proton acceptor is the aspartate 373. A disulfide bond links cysteine 391 and cysteine 417. Tyrosine 461 (schiff-base intermediate with substrate; via topaquinone) is an active-site residue. The residue at position 461 (tyrosine 461) is a 2',4',5'-topaquinone. The Cu(2+) site is built by histidine 510 and histidine 512. Ca(2+)-binding residues include aspartate 519, leucine 520, and aspartate 521. A glycan (N-linked (GlcNAc...) asparagine) is linked at asparagine 538. Ca(2+)-binding residues include glutamate 562, phenylalanine 653, asparagine 656, glutamate 658, aspartate 664, and leucine 665. Histidine 675 contacts Cu(2+). A glycan (N-linked (GlcNAc...) asparagine) is linked at asparagine 745.

The protein belongs to the copper/topaquinone oxidase family. Homodimer; disulfide-linked. It depends on Cu(2+) as a cofactor. Ca(2+) serves as cofactor. Requires L-topaquinone as cofactor. Post-translationally, N-glycosylated. In terms of processing, topaquinone (TPQ) is generated by copper-dependent autoxidation of a specific tyrosyl residue. Widely expressed with higher expression in placenta and kidney.

It localises to the secreted. The protein localises to the extracellular space. It is found in the cell membrane. The catalysed reaction is histamine + O2 + H2O = imidazole-4-acetaldehyde + H2O2 + NH4(+). The enzyme catalyses N(tau)-methylhistamine + O2 + H2O = 1-methylimidazole-4-acetaldehyde + H2O2 + NH4(+). It carries out the reaction putrescine + O2 + H2O = 4-aminobutanal + H2O2 + NH4(+). It catalyses the reaction cadaverine + O2 + H2O = 5-aminopentanal + H2O2 + NH4(+). With respect to regulation, inhibited by amiloride and amiloride analogs. Inhibited by isoniazid, cimetidine, clonidine, berenil and pentamidine. In terms of biological role, catalyzes the oxidative deamination of primary amines to the corresponding aldehydes with the concomitant production of hydrogen peroxide and ammonia. Its preferred substrates are the diamines histamine and 1-methylhistamine and it could therefore play a role in allergic and immune responses. Has a broad specificity for diamines and can also act on cadaverine and putrescine, two products of amino acid catabolism. It could also act on polyamines, like spermidine and spermine though less efficiently, and regulate various biological processes. The protein is Diamine oxidase [copper-containing] of Homo sapiens (Human).